The primary structure comprises 169 residues: Peptide deformylase (169 aa).

Fe cation contacts are provided by Cys-94 and His-136. Glu-137 is a catalytic residue. His-140 contacts Fe cation.

Belongs to the polypeptide deformylase family. The cofactor is Fe(2+).

It carries out the reaction N-terminal N-formyl-L-methionyl-[peptide] + H2O = N-terminal L-methionyl-[peptide] + formate. Functionally, removes the formyl group from the N-terminal Met of newly synthesized proteins. Requires at least a dipeptide for an efficient rate of reaction. N-terminal L-methionine is a prerequisite for activity but the enzyme has broad specificity at other positions. This Desulfotalea psychrophila (strain LSv54 / DSM 12343) protein is Peptide deformylase.